The following is a 261-amino-acid chain: 5'-nucleotidase SurE (261 aa).

Residues D8, D9, S43, and N96 each coordinate a divalent metal cation.

This sequence belongs to the SurE nucleotidase family. The cofactor is a divalent metal cation.

The protein localises to the cytoplasm. The enzyme catalyses a ribonucleoside 5'-phosphate + H2O = a ribonucleoside + phosphate. Nucleotidase that shows phosphatase activity on nucleoside 5'-monophosphates. The protein is 5'-nucleotidase SurE of Dinoroseobacter shibae (strain DSM 16493 / NCIMB 14021 / DFL 12).